The primary structure comprises 187 residues: Interferon beta (187 aa).

A signal peptide spans 1–21; that stretch reads MTSRSLLPFVLSLLLPRIIMA. Tyr24 is subject to Phosphotyrosine. Residues Cys53 and Cys162 are joined by a disulfide bond. 4 N-linked (GlcNAc...) asparagine glycosylation sites follow: Asn76, Asn95, Asn132, and Asn158.

Belongs to the alpha/beta interferon family. In terms of assembly, monomer.

The protein resides in the secreted. Type I interferon cytokine that plays a key role in the innate immune response to infection, developing tumors and other inflammatory stimuli. Signals via binding to high-affinity (IFNAR2) and low-affinity (IFNAR1) heterodimeric receptor, activating the canonical Jak-STAT signaling pathway resulting in transcriptional activation or repression of interferon-regulated genes that encode the effectors of the interferon response, such as antiviral proteins, regulators of cell proliferation and differentiation, and immunoregulatory proteins. Signals mostly via binding to a IFNAR1-IFNAR2 heterodimeric receptor, but can also function with IFNAR1 alone and independently of Jak-STAT pathways. Elicits a wide variety of responses, including antiviral and antibacterial activities, and can regulate the development of B-cells, myelopoiesis and lipopolysaccharide (LPS)-inducible production of tumor necrosis factor. Plays a role in neuronal homeostasis by regulating dopamine turnover and protecting dopaminergic neurons: acts by promoting neuronal autophagy and alpha-synuclein clearance, thereby preventing dopaminergic neuron loss. IFNB1 is more potent than interferon-alpha (IFN-alpha) in inducing the apoptotic and antiproliferative pathways required for control of tumor cell growth. The chain is Interferon beta (IFNB1) from Tachyglossus aculeatus aculeatus (Southeast Australian short-beaked echidna).